Consider the following 132-residue polypeptide: ATP synthase epsilon chain (132 aa).

It belongs to the ATPase epsilon chain family. In terms of assembly, F-type ATPases have 2 components, CF(1) - the catalytic core - and CF(0) - the membrane proton channel. CF(1) has five subunits: alpha(3), beta(3), gamma(1), delta(1), epsilon(1). CF(0) has three main subunits: a, b and c.

The protein resides in the cell membrane. Produces ATP from ADP in the presence of a proton gradient across the membrane. This Bacillus velezensis (strain DSM 23117 / BGSC 10A6 / LMG 26770 / FZB42) (Bacillus amyloliquefaciens subsp. plantarum) protein is ATP synthase epsilon chain.